Consider the following 924-residue polypeptide: Ubiquitin carboxyl-terminal hydrolase 5 (924 aa).

Positions 15–145 (LSPEEERVFI…GPTLARRVIS (131 aa)) constitute a DUSP domain. A compositionally biased stretch (polar residues) spans 64 to 83 (TNDGSSLSEHCDSPGSSTLK). Residues 64–87 (TNDGSSLSEHCDSPGSSTLKKPSR) are disordered. The region spanning 317 to 916 (TGLLNLGNTC…AAYVLFYRRK (600 aa)) is the USP domain. Cys326 functions as the Nucleophile in the catalytic mechanism. Residues 648–667 (REESVGKKGNSDSSIPERRS) are compositionally biased toward basic and acidic residues. Residues 648 to 690 (REESVGKKGNSDSSIPERRSARFNNTEEEDKVGGLKKAKKSNS) are disordered. The Proton acceptor role is filled by His874.

It belongs to the peptidase C19 family.

The enzyme catalyses Thiol-dependent hydrolysis of ester, thioester, amide, peptide and isopeptide bonds formed by the C-terminal Gly of ubiquitin (a 76-residue protein attached to proteins as an intracellular targeting signal).. Recognizes and hydrolyzes the peptide bond at the C-terminal Gly of ubiquitin. Involved in the processing of poly-ubiquitin precursors as well as that of ubiquitinated proteins. The chain is Ubiquitin carboxyl-terminal hydrolase 5 (UBP5) from Arabidopsis thaliana (Mouse-ear cress).